A 492-amino-acid chain; its full sequence is MAHAARLLAALAALLAAAATGDARPSKIAVVGAGIGGSAVAHFLQQHFGPRVQIDVFEKGTVGGRLATISVNKQHYESGAASFHSLSLHMQGFVKQLGLRHRREVGGRSAIFNGENFVLEETDWYLLNLFRLWWHYGISFLRLQMWVEEVMEKFMRIYKYQAHGYAFSGVEELLYSLGESAFVNMTQRSVAESLLQVGVTQRFIDDVVSAVLRASYGQSAAMPAFAGAMSLAGAQGSLWSVEGGNKLVCSGLLKLTKANVIHATVTTVTLQPTEGKPLYRVRYENEAGTGSDNYDIVVIATPLHLDNSSTIAFEGFDPPIDVVQGSFQPTIVSLVHGYLNSSYFGFPDPKLFPFANILTTDFPTFFCALDNICPVNISASFRRKQPQEAAVWRVQSPQPLLRSQLKTLFRSYYSVQTAEWQAHPVHSPHTPLPRFTLHDQLFHLNALEWAASSVEVTAVAAKNVALLAFNRWYQDLDKIDQKDLMHKVKTEL.

The N-terminal stretch at 1–21 is a signal peptide; sequence MAHAARLLAALAALLAAAATG. N-linked (GlcNAc...) asparagine glycosylation is present at N340.

This sequence belongs to the prenylcysteine oxidase family. Requires FAD as cofactor.

The protein resides in the secreted. Its function is as follows. Likely to have oxidoreductase activity. Required in the mevalonate pathway to regulate prenylation and enhances the bactericidal activity of neutrophils. In Bos taurus (Bovine), this protein is Prenylcysteine oxidase 1-like (PCYOX1L).